Here is a 1682-residue protein sequence, read N- to C-terminus: Cilia- and flagella-associated protein 43 (1682 aa).

WD repeat units follow at residues 168–207 (NPGMDVSQMSFNPMNWHQMCLSSSSAMSVWTIERSNQEHH), 262–305 (PKDD…VTVL), 315–354 (DGAPLINPLTLVYQKDGILASGIDGVIYSFIIKDSKYQVK), 358–397 (EFDGPVTHLVFSPSYKMLLIQTDKGSVYIYTFGAEMPLDK), 488–527 (LSQSPVKIVTYDQRGIFLLVGTEEGNIFVIDARPSKSFQI), and 697–738 (SHQG…ANIA). Residues 767 to 790 (RESTNEQQEETTESQKHLNSDSSE) form a disordered region. Coiled coils occupy residues 926–960 (KERTEEELQELSKVMQQKKTEIECLKLRKEIVEVQ) and 1171–1223 (SEDE…HLKR).

This sequence belongs to the CFAP43 family. In terms of tissue distribution, expressed in testis. Expressed in the lung, brain, oviduct and nasal cavity.

It localises to the cell projection. The protein localises to the cilium. The protein resides in the flagellum. It is found in the cytoplasm. Its subcellular location is the cytoskeleton. It localises to the flagellum axoneme. The protein localises to the cilium axoneme. Its function is as follows. Flagellar protein involved in sperm flagellum axoneme organization and function. Involved in the regulation of the beating frequency of motile cilia on the epithelial cells of the respiratory tract. The polypeptide is Cilia- and flagella-associated protein 43 (Mus musculus (Mouse)).